Here is a 2725-residue protein sequence, read N- to C-terminus: Teneurin-1 (2725 aa).

Residues 1 to 48 form a disordered region; sequence MEQTDCKPYQPLPKVKHEMDLAYTSSSDESEDGRKPRQSYNSRETLHE. Positions 1–318 constitute a Teneurin N-terminal domain; it reads MEQTDCKPYQ…KPYRCCNWKC (318 aa). Topologically, residues 1 to 324 are cytoplasmic; sequence MEQTDCKPYQ…NWKCTALSAT (324 aa). The Nuclear localization signal (NLS) signature appears at 62-65; that stretch reads RKRK. Position 105 is a phosphoserine (Ser105). Thr109 bears the Phosphothreonine mark. Phosphoserine is present on Ser116. A compositionally biased stretch (polar residues) spans 174–189; sequence AGSTQDVQSSPHNQFT. Residues 174-241 form a disordered region; that stretch reads AGSTQDVQSS…PAPPTSTQDS (68 aa). Positions 192 to 201 are enriched in pro residues; that stretch reads PLPPPPPPPH. A Required for interaction with SORBS1 (Ten-1 ICD form) motif is present at residues 290–297; that stretch reads PPPRPLPR. Residues 325–345 form a helical membrane-spanning segment; the sequence is AITVTLALLLAYVIAVHLFGL. At 346–2725 the chain is on the extracellular side; sequence TWQLQPVEGE…FMRQSEIGRR (2380 aa). Asn433 carries an N-linked (GlcNAc...) asparagine glycan. EGF-like domains are found at residues 528 to 559, 560 to 591, 592 to 624, 625 to 657, 658 to 691, 692 to 721, 722 to 753, and 761 to 796; these read IMDD…PDCA, RDSC…ECDV, PEEQ…EICE, EEDC…NCET, PLPV…SDCS, TELC…GPTC, EERS…DHCT, and VRDG…TGCN. 22 cysteine pairs are disulfide-bonded: Cys532/Cys542, Cys536/Cys547, Cys549/Cys558, Cys567/Cys578, Cys580/Cys589, Cys596/Cys607, Cys601/Cys612, Cys614/Cys623, Cys628/Cys639, Cys633/Cys644, Cys646/Cys655, Cys666/Cys679, Cys681/Cys690, Cys695/Cys705, Cys699/Cys710, Cys712/Cys721, Cys726/Cys736, Cys730/Cys741, Cys743/Cys752, Cys765/Cys775, Cys769/Cys784, and Cys786/Cys795. 2 N-linked (GlcNAc...) asparagine glycosylation sites follow: Asn905 and Asn1084. 5 NHL repeats span residues 1194–1219, 1292–1336, 1351–1402, 1414–1458, and 1481–1524; these read LFAP…VRRI, SHCG…NAVI, LSCD…IAGR, FLVS…VTTN, and CFSG…ISRN. A YD 1 repeat occupies 1534–1553; that stretch reads YEIASPADQELYQFTVNGTH. Asn1550 and Asn1567 each carry an N-linked (GlcNAc...) asparagine glycan. 4 YD repeats span residues 1570-1590, 1608-1632, 1633-1654, and 1655-1675; these read YNSE…VHIR, YWLT…ALMT, YPGN…TVYE, and YDPE…SSFH. N-linked (GlcNAc...) asparagine glycans are attached at residues Asn1663, Asn1699, Asn1757, Asn1781, and Asn1842. 11 YD repeats span residues 1845-1864, 1865-1885, 1886-1904, 1905-1925, 1933-1949, 1950-1969, 1970-1989, 1992-2012, 2015-2035, 2085-2105, and 2113-2133; these read YSPS…EKME, YDQS…WSYT, YLEK…YIFE, YDQP…HSLQ, YRNI…FIQD, YSRD…RRVL, YKYT…TQVT, YEES…FICT, YRQT…EGLV, YDLN…FSAN, and YEIL…VGRM. Residue Asn2145 is glycosylated (N-linked (GlcNAc...) asparagine). 5 YD repeats span residues 2153-2173, 2174-2194, 2196-2216, 2228-2248, and 2250-2270; these read YDAD…WRYS, YDLN…LTPL, YDLR…DEDG, YNSN…TVQY, and YDGL…LQFF. Asn2285 carries N-linked (GlcNAc...) asparagine glycosylation. YD repeat units lie at residues 2296 to 2313 and 2314 to 2337; these read YDLQ…GEEY and YVAC…IKEI. Phosphoserine is present on Ser2580. A glycan (N-linked (GlcNAc...) asparagine) is linked at Asn2602.

This sequence belongs to the tenascin family. Teneurin subfamily. In terms of assembly, homodimer; disulfide-linked. Heterodimer with either TENM2 or TENM3. May also form heterodimer with TENM4. Ten-1 ICD interacts with SORBS1 (via third SH3 domain). Interacts with MBD1. Ten-1 ICD interacts with HINT1. Post-translationally, derives from the plasma membrane form by proteolytic processing. Further proteolytic cleavage may be generated. In terms of tissue distribution, expressed in fetal brain.

Its subcellular location is the cell membrane. The protein localises to the nucleus. The protein resides in the nucleus speckle. It is found in the nucleus matrix. It localises to the cytoplasm. Its subcellular location is the cytoskeleton. Functionally, involved in neural development, regulating the establishment of proper connectivity within the nervous system. May function as a cellular signal transducer. In terms of biological role, plays a role in the regulation of neuroplasticity in the limbic system. Mediates a rapid reorganization of actin- and tubulin-based cytoskeleton elements with an increase in dendritic arborization and spine density formation of neurons in the hippocampus and amygdala. Induces BDNF transcription inhibition in neurons. Activates the mitogen-activated protein (MAP) kinase 2 (MEK2) and extracellular signal-regulated kinase (ERK) cascade. Also acts as a bioactive neuroprotective peptide on limbic neurons of the brain and regulates stress-induced behavior: attenuates alkalosis-associated necrotic cell death and the effects of corticotropin-releasing factor (CRF) on c-fos/FOS induction and on the reinstatement of cocaine seeking. Induces gene transcription activation. In Homo sapiens (Human), this protein is Teneurin-1 (TENM1).